The following is a 206-amino-acid chain: RNA pyrophosphohydrolase (206 aa).

The Nudix hydrolase domain occupies 6–150; that stretch reads GYRPNVGIVI…KRDVYRKVMK (145 aa). The short motif at 38–59 is the Nudix box element; the sequence is GGINEGENIETAMYRELYEEVG. The span at 162-191 shows a compositional bias: basic and acidic residues; it reads KPETVEKPRVERTEKRDFQKRDNQKREFRK. The tract at residues 162–206 is disordered; the sequence is KPETVEKPRVERTEKRDFQKRDNQKREFRKSARMWNNSHQKGKAQ.

Belongs to the Nudix hydrolase family. RppH subfamily. It depends on a divalent metal cation as a cofactor.

Accelerates the degradation of transcripts by removing pyrophosphate from the 5'-end of triphosphorylated RNA, leading to a more labile monophosphorylated state that can stimulate subsequent ribonuclease cleavage. This is RNA pyrophosphohydrolase from Actinobacillus pleuropneumoniae serotype 7 (strain AP76).